The following is a 334-amino-acid chain: Protein-methionine-sulfoxide reductase catalytic subunit MsrP (334 aa).

A signal peptide (tat-type signal) is located at residues 1–44 (MKKNQFLKESDVTAESVFFMKRRQVLKALGISAAALSLPHAAHA). Residues asparagine 88, 91–92 (YE), cysteine 146, threonine 181, asparagine 233, arginine 238, and 249–251 (GIK) each bind Mo-molybdopterin.

This sequence belongs to the MsrP family. As to quaternary structure, heterodimer of a catalytic subunit (MsrP) and a heme-binding subunit (MsrQ). The cofactor is Mo-molybdopterin. Predicted to be exported by the Tat system. The position of the signal peptide cleavage has not been experimentally proven.

Its subcellular location is the periplasm. It catalyses the reaction L-methionyl-[protein] + a quinone + H2O = L-methionyl-(S)-S-oxide-[protein] + a quinol. It carries out the reaction L-methionyl-[protein] + a quinone + H2O = L-methionyl-(R)-S-oxide-[protein] + a quinol. Its function is as follows. Part of the MsrPQ system that repairs oxidized periplasmic proteins containing methionine sulfoxide residues (Met-O), using respiratory chain electrons. Thus protects these proteins from oxidative-stress damage caused by reactive species of oxygen and chlorine generated by the host defense mechanisms. MsrPQ is essential for the maintenance of envelope integrity under bleach stress, rescuing a wide series of structurally unrelated periplasmic proteins from methionine oxidation, including the primary periplasmic chaperone SurA and the lipoprotein Pal. The catalytic subunit MsrP is non-stereospecific, being able to reduce both (R-) and (S-) diastereoisomers of methionine sulfoxide. This Escherichia coli (strain UTI89 / UPEC) protein is Protein-methionine-sulfoxide reductase catalytic subunit MsrP.